A 122-amino-acid chain; its full sequence is Large ribosomal subunit protein uL14 (122 aa).

The protein belongs to the universal ribosomal protein uL14 family. In terms of assembly, part of the 50S ribosomal subunit. Forms a cluster with proteins L3 and L19. In the 70S ribosome, L14 and L19 interact and together make contacts with the 16S rRNA in bridges B5 and B8.

Binds to 23S rRNA. Forms part of two intersubunit bridges in the 70S ribosome. The chain is Large ribosomal subunit protein uL14 from Chlamydia pneumoniae (Chlamydophila pneumoniae).